We begin with the raw amino-acid sequence, 121 residues long: UPF0102 protein AAur_2443 (121 aa).

It belongs to the UPF0102 family.

The polypeptide is UPF0102 protein AAur_2443 (Paenarthrobacter aurescens (strain TC1)).